We begin with the raw amino-acid sequence, 181 residues long: Inner membrane-spanning protein YciB (181 aa).

5 helical membrane-spanning segments follow: residues 24-44 (SATA…WLRH), 49-69 (NMLW…LILQ), 81-101 (LYWL…KNLI), 119-139 (LNIS…YVAY), and 149-169 (FKLF…ALLL).

This sequence belongs to the YciB family.

The protein resides in the cell inner membrane. Its function is as follows. Plays a role in cell envelope biogenesis, maintenance of cell envelope integrity and membrane homeostasis. The sequence is that of Inner membrane-spanning protein YciB from Nitrosomonas eutropha (strain DSM 101675 / C91 / Nm57).